The sequence spans 484 residues: Glutamyl-tRNA(Gln) amidotransferase subunit A (484 aa).

Catalysis depends on charge relay system residues Lys-76 and Ser-151. Ser-175 (acyl-ester intermediate) is an active-site residue.

The protein belongs to the amidase family. GatA subfamily. In terms of assembly, heterotrimer of A, B and C subunits.

The catalysed reaction is L-glutamyl-tRNA(Gln) + L-glutamine + ATP + H2O = L-glutaminyl-tRNA(Gln) + L-glutamate + ADP + phosphate + H(+). Allows the formation of correctly charged Gln-tRNA(Gln) through the transamidation of misacylated Glu-tRNA(Gln) in organisms which lack glutaminyl-tRNA synthetase. The reaction takes place in the presence of glutamine and ATP through an activated gamma-phospho-Glu-tRNA(Gln). The polypeptide is Glutamyl-tRNA(Gln) amidotransferase subunit A (Cellvibrio japonicus (strain Ueda107) (Pseudomonas fluorescens subsp. cellulosa)).